A 154-amino-acid polypeptide reads, in one-letter code: MTTFSQKPADVVKKWILIDAEGLVVGRLATVIANHLRGKHKPTFTPHVDDGDNVIVINADKVVFTGKKFTDKVYYWHTGHPGGIKERTARQLLEGRFPERVVEKAVERMVPRGPLGRRQMKNLRVYAGAEHPHVAQQPEVLDVAKLNSKNKKVA.

This sequence belongs to the universal ribosomal protein uL13 family. As to quaternary structure, part of the 50S ribosomal subunit.

Its function is as follows. This protein is one of the early assembly proteins of the 50S ribosomal subunit, although it is not seen to bind rRNA by itself. It is important during the early stages of 50S assembly. The protein is Large ribosomal subunit protein uL13 of Mesorhizobium japonicum (strain LMG 29417 / CECT 9101 / MAFF 303099) (Mesorhizobium loti (strain MAFF 303099)).